A 438-amino-acid polypeptide reads, in one-letter code: Aflatoxin cluster transcriptional coactivator aflS (438 aa).

The 70-residue stretch at 65–134 (LALYNQLLAC…PSPGHVAHSV (70 aa)) folds into the HTH iclR-type domain. A DNA-binding region (H-T-H motif) is located at residues 95-114 (FEDVADIAGVPECRLRRLVR).

In terms of assembly, interacts with aflR.

The protein localises to the nucleus. It localises to the endosome. Its function is as follows. Transcription coactivator involved in regulation of the aflatoxin biosynthesis gene cluster with aflR. The ratio of the expression data between aflS:aflR plays a crucial role in the regulation of aflatoxins production. A high ratio, produced at a range between 17 and 30 degrees Celsius, corresponds with the production profile of aflatoxin G1 biosynthesis. A low ratio, produced over 30 degrees Celsius, is related to aflatoxin B1 biosynthesis. AflJ may act in aflR transport to or from the nucleus, thus controlling the availability of aflR for transcriptional activation of aflatoxin biosynthesis cluster genes. AflJ may also assist in directing endosomes to the cytoplasmic membrane for aflatoxin export. The protein is Aflatoxin cluster transcriptional coactivator aflS of Aspergillus parasiticus (strain ATCC 56775 / NRRL 5862 / SRRC 143 / SU-1).